The following is a 415-amino-acid chain: UDP-galactose transporter homolog 1 (415 aa).

A disordered region spans residues 1–39; sequence MHLVPEGSESMSTQQNGSAQKPVTLNGSASTKGQAPEAP. The span at 9–33 shows a compositional bias: polar residues; sequence ESMSTQQNGSAQKPVTLNGSASTKG. Residues Asn-16 and Asn-26 are each glycosylated (N-linked (GlcNAc...) asparagine). A run of 5 helical transmembrane segments spans residues 45 to 65, 95 to 115, 132 to 152, 161 to 181, and 185 to 205; these read LIQL…WGVL, IVLN…YLYF, ILFP…FGYA, TFIL…LTIF, and YPLY…TFTL. The N-linked (GlcNAc...) asparagine glycan is linked to Asn-221. A helical membrane pass occupies residues 223–243; sequence SGSSLYGIFLLSINLLLDGLT. Asn-244 carries an N-linked (GlcNAc...) asparagine glycan. The next 3 helical transmembrane spans lie at 281-301, 325-345, and 368-388; these read LLVM…PIPI, NVLG…YTLS, and VFWF…LVFG.

This sequence belongs to the nucleotide-sugar transporter family. SLC35B subfamily.

The protein resides in the endoplasmic reticulum membrane. May be involved in specific transport of UDP-Gal from the cytosol to the Golgi lumen. Involved in the maintenance of optimal conditions for the folding of secretory pathway proteins in the endoplasmic reticulum. The polypeptide is UDP-galactose transporter homolog 1 (hut1) (Aspergillus fumigatus (strain ATCC MYA-4609 / CBS 101355 / FGSC A1100 / Af293) (Neosartorya fumigata)).